A 688-amino-acid chain; its full sequence is Translation initiation factor IF-2 (688 aa).

The interval 53-101 is disordered; sequence GAEKPSVADEFEVEEKVVRSKKNSNKNKKKGKANEDKRQDNFAGRQQTP. Residues 71–83 are compositionally biased toward basic residues; that stretch reads RSKKNSNKNKKKG. The 170-residue stretch at 190 to 359 folds into the tr-type G domain; the sequence is ERPAVVTIMG…LLVSEVEEYK (170 aa). Residues 199–206 are G1; it reads GHVDHGKT. 199–206 is a binding site for GTP; it reads GHVDHGKT. The G2 stretch occupies residues 224–228; sequence GITQH. The interval 245–248 is G3; sequence DTPG. GTP contacts are provided by residues 245-249 and 299-302; these read DTPGH and NKMD. The tract at residues 299–302 is G4; sequence NKMD. The segment at 335–337 is G5; sequence SAI.

The protein belongs to the TRAFAC class translation factor GTPase superfamily. Classic translation factor GTPase family. IF-2 subfamily.

The protein resides in the cytoplasm. In terms of biological role, one of the essential components for the initiation of protein synthesis. Protects formylmethionyl-tRNA from spontaneous hydrolysis and promotes its binding to the 30S ribosomal subunits. Also involved in the hydrolysis of GTP during the formation of the 70S ribosomal complex. In Bacillus mycoides (strain KBAB4) (Bacillus weihenstephanensis), this protein is Translation initiation factor IF-2.